The chain runs to 446 residues: Bifunctional protein GlmU (446 aa).

The tract at residues 1–228 is pyrophosphorylase; that stretch reads MTKTAAVILA…AEELLGVNSR (228 aa). Residues 9–12, Lys-23, Gln-72, 77–78, 100–102, Gly-140, Glu-154, Asn-169, and Asn-226 contribute to the UDP-N-acetyl-alpha-D-glucosamine site; these read LAAG, GT, and YGD. Residue Asp-102 coordinates Mg(2+). Residue Asn-226 coordinates Mg(2+). Residues 229 to 249 form a linker region; that stretch reads SELAAAEAVIQGRLREKAMEG. The tract at residues 250 to 446 is N-acetyltransferase; sequence GATLTAPETV…AHMRRLTGKN (197 aa). Residues Arg-315 and Lys-333 each contribute to the UDP-N-acetyl-alpha-D-glucosamine site. His-345 serves as the catalytic Proton acceptor. 2 residues coordinate UDP-N-acetyl-alpha-D-glucosamine: Tyr-348 and Asn-359. Acetyl-CoA contacts are provided by residues Ala-362, 368–369, Ser-387, Ala-405, and Arg-422; that span reads NY.

The protein in the N-terminal section; belongs to the N-acetylglucosamine-1-phosphate uridyltransferase family. This sequence in the C-terminal section; belongs to the transferase hexapeptide repeat family. Homotrimer. Mg(2+) serves as cofactor.

The protein resides in the cytoplasm. It catalyses the reaction alpha-D-glucosamine 1-phosphate + acetyl-CoA = N-acetyl-alpha-D-glucosamine 1-phosphate + CoA + H(+). The catalysed reaction is N-acetyl-alpha-D-glucosamine 1-phosphate + UTP + H(+) = UDP-N-acetyl-alpha-D-glucosamine + diphosphate. It functions in the pathway nucleotide-sugar biosynthesis; UDP-N-acetyl-alpha-D-glucosamine biosynthesis; N-acetyl-alpha-D-glucosamine 1-phosphate from alpha-D-glucosamine 6-phosphate (route II): step 2/2. It participates in nucleotide-sugar biosynthesis; UDP-N-acetyl-alpha-D-glucosamine biosynthesis; UDP-N-acetyl-alpha-D-glucosamine from N-acetyl-alpha-D-glucosamine 1-phosphate: step 1/1. The protein operates within bacterial outer membrane biogenesis; LPS lipid A biosynthesis. In terms of biological role, catalyzes the last two sequential reactions in the de novo biosynthetic pathway for UDP-N-acetylglucosamine (UDP-GlcNAc). The C-terminal domain catalyzes the transfer of acetyl group from acetyl coenzyme A to glucosamine-1-phosphate (GlcN-1-P) to produce N-acetylglucosamine-1-phosphate (GlcNAc-1-P), which is converted into UDP-GlcNAc by the transfer of uridine 5-monophosphate (from uridine 5-triphosphate), a reaction catalyzed by the N-terminal domain. The sequence is that of Bifunctional protein GlmU from Rhodospirillum rubrum (strain ATCC 11170 / ATH 1.1.1 / DSM 467 / LMG 4362 / NCIMB 8255 / S1).